The sequence spans 285 residues: UDP-3-O-acyl-N-acetylglucosamine deacetylase (285 aa).

Zn(2+)-binding residues include His-89, His-243, and Asp-247. Residue His-270 is the Proton donor of the active site.

This sequence belongs to the LpxC family. Zn(2+) is required as a cofactor.

It carries out the reaction a UDP-3-O-[(3R)-3-hydroxyacyl]-N-acetyl-alpha-D-glucosamine + H2O = a UDP-3-O-[(3R)-3-hydroxyacyl]-alpha-D-glucosamine + acetate. It functions in the pathway glycolipid biosynthesis; lipid IV(A) biosynthesis; lipid IV(A) from (3R)-3-hydroxytetradecanoyl-[acyl-carrier-protein] and UDP-N-acetyl-alpha-D-glucosamine: step 2/6. In terms of biological role, catalyzes the hydrolysis of UDP-3-O-myristoyl-N-acetylglucosamine to form UDP-3-O-myristoylglucosamine and acetate, the committed step in lipid A biosynthesis. This is UDP-3-O-acyl-N-acetylglucosamine deacetylase from Thermosynechococcus vestitus (strain NIES-2133 / IAM M-273 / BP-1).